A 172-amino-acid chain; its full sequence is NADH-ubiquinone oxidoreductase chain 6 (172 aa).

The next 5 membrane-spanning stretches (helical) occupy residues 1–21 (MAFY…AIAS), 24–44 (APYF…GILV), 53–73 (LILF…SAAL), 86–106 (VVFW…GFLL), and 140–160 (GKML…VLEV).

Belongs to the complex I subunit 6 family. In terms of assembly, core subunit of respiratory chain NADH dehydrogenase (Complex I) which is composed of 45 different subunits.

It is found in the mitochondrion inner membrane. The catalysed reaction is a ubiquinone + NADH + 5 H(+)(in) = a ubiquinol + NAD(+) + 4 H(+)(out). Functionally, core subunit of the mitochondrial membrane respiratory chain NADH dehydrogenase (Complex I) which catalyzes electron transfer from NADH through the respiratory chain, using ubiquinone as an electron acceptor. Essential for the catalytic activity and assembly of complex I. This is NADH-ubiquinone oxidoreductase chain 6 (mt-nd6) from Danio rerio (Zebrafish).